Here is a 162-residue protein sequence, read N- to C-terminus: Large ribosomal subunit protein uL10 (162 aa).

It belongs to the universal ribosomal protein uL10 family. In terms of assembly, part of the ribosomal stalk of the 50S ribosomal subunit. The N-terminus interacts with L11 and the large rRNA to form the base of the stalk. The C-terminus forms an elongated spine to which L12 dimers bind in a sequential fashion forming a multimeric L10(L12)X complex.

In terms of biological role, forms part of the ribosomal stalk, playing a central role in the interaction of the ribosome with GTP-bound translation factors. This chain is Large ribosomal subunit protein uL10, found in Borrelia recurrentis (strain A1).